A 254-amino-acid polypeptide reads, in one-letter code: 5'/3'-nucleotidase SurE (254 aa).

Residues Asp-9, Asp-10, Ser-40, and Asn-93 each coordinate a divalent metal cation.

The protein belongs to the SurE nucleotidase family. A divalent metal cation serves as cofactor.

The protein localises to the cytoplasm. It catalyses the reaction a ribonucleoside 5'-phosphate + H2O = a ribonucleoside + phosphate. It carries out the reaction a ribonucleoside 3'-phosphate + H2O = a ribonucleoside + phosphate. The enzyme catalyses [phosphate](n) + H2O = [phosphate](n-1) + phosphate + H(+). In terms of biological role, nucleotidase with a broad substrate specificity as it can dephosphorylate various ribo- and deoxyribonucleoside 5'-monophosphates and ribonucleoside 3'-monophosphates with highest affinity to 3'-AMP. Also hydrolyzes polyphosphate (exopolyphosphatase activity) with the preference for short-chain-length substrates (P20-25). Might be involved in the regulation of dNTP and NTP pools, and in the turnover of 3'-mononucleotides produced by numerous intracellular RNases (T1, T2, and F) during the degradation of various RNAs. In Yersinia pestis bv. Antiqua (strain Antiqua), this protein is 5'/3'-nucleotidase SurE.